Here is a 453-residue protein sequence, read N- to C-terminus: Regulatory protein opaque-2 (453 aa).

The tract at residues 145 to 243 (SSVVTSDQRS…SNRESARRSR (99 aa)) is disordered. A compositionally biased stretch (polar residues) spans 146-175 (SVVTSDQRSQGSNNHTGGSSIRNNPVQNKL). Over residues 207 to 216 (PSDEDMDGEV) the composition is skewed to acidic residues. Basic and acidic residues predominate over residues 224-240 (PTEERVRKKESNRESAR). One can recognise a bZIP domain in the interval 225 to 288 (TEERVRKKES…NDANVDNRVL (64 aa)). Residues 228–251 (RVRKKESNRESARRSRYRKAAHLK) form a basic motif region. The segment at 253–274 (LEDQVAQLKAENSCLLRRIAAL) is leucine-zipper.

This sequence belongs to the bZIP family. As to quaternary structure, interacts with the Dof zinc finger protein PBF. In terms of tissue distribution, seed endosperm.

The protein resides in the nucleus. Functionally, involved in the regulation of the endosperm-specific production of albumin b-32 and other zein proteins. It is a trans-acting transcriptional activator that binds to the consensus sequence 5'-GATGAYRTGR-3'. This chain is Regulatory protein opaque-2 (O2), found in Zea mays (Maize).